Reading from the N-terminus, the 486-residue chain is Cysteine--tRNA ligase (486 aa).

C29 serves as a coordination point for Zn(2+). Positions 31-41 (VTVYDYCHLGH) match the 'HIGH' region motif. Zn(2+) contacts are provided by C214, H239, and E243. A 'KMSKS' region motif is present at residues 271–275 (KMSKS). Residue K274 participates in ATP binding.

Belongs to the class-I aminoacyl-tRNA synthetase family. In terms of assembly, monomer. Requires Zn(2+) as cofactor.

Its subcellular location is the cytoplasm. The enzyme catalyses tRNA(Cys) + L-cysteine + ATP = L-cysteinyl-tRNA(Cys) + AMP + diphosphate. The polypeptide is Cysteine--tRNA ligase (Nostoc sp. (strain PCC 7120 / SAG 25.82 / UTEX 2576)).